The following is a 155-amino-acid chain: Large ribosomal subunit protein uL22 (155 aa).

Positions His109–Glu155 are disordered. Basic and acidic residues predominate over residues Lys146 to Glu155.

Belongs to the universal ribosomal protein uL22 family. In terms of assembly, part of the 50S ribosomal subunit.

Its function is as follows. This protein binds specifically to 23S rRNA; its binding is stimulated by other ribosomal proteins, e.g. L4, L17, and L20. It is important during the early stages of 50S assembly. It makes multiple contacts with different domains of the 23S rRNA in the assembled 50S subunit and ribosome. Functionally, the globular domain of the protein is located near the polypeptide exit tunnel on the outside of the subunit, while an extended beta-hairpin is found that lines the wall of the exit tunnel in the center of the 70S ribosome. This is Large ribosomal subunit protein uL22 from Mycolicibacterium vanbaalenii (strain DSM 7251 / JCM 13017 / BCRC 16820 / KCTC 9966 / NRRL B-24157 / PYR-1) (Mycobacterium vanbaalenii).